Here is a 1529-residue protein sequence, read N- to C-terminus: uncharacterized protein (1529 aa).

Residues 1–11 (MDKNNNNNNSN) show a composition bias toward low complexity. 7 disordered regions span residues 1 to 85 (MDKN…SKGV), 335 to 371 (LLSNGGGISTSEPEISPSTSPLTGTTPTSPSSSWSSS), 660 to 694 (LPNLTNSISSPSHSSSSSSSTTTNINNSNNNTATA), 798 to 843 (NCNI…SSYS), 1016 to 1035 (SSLPISQNLSDDSSNTNTNN), 1334 to 1364 (QQQQQQPQQQSSQPQQQSSQPQQIPQSQLQQ), and 1454 to 1497 (QQQV…SRLP). Residues 24–42 (QKRVQNPSFSSGQSRTVPS) show a composition bias toward polar residues. Over residues 51–79 (ISSSSSSSSISTTNNTTTTTTSGTGSTSS) the composition is skewed to low complexity. Over residues 810 to 833 (NNNNNNNNNNNNNNNNNNNNNNNN) the composition is skewed to low complexity. Polar residues-rich tracts occupy residues 834–843 (VLPRSNSSYS) and 1016–1027 (SSLPISQNLSDD). Low complexity predominate over residues 1454–1494 (QQQVQTPSSPQTLASLLGNSSSNTLTSSSSTLSLNESSTLS).

This is an uncharacterized protein from Dictyostelium discoideum (Social amoeba).